We begin with the raw amino-acid sequence, 515 residues long: Bifunctional purine biosynthesis protein PurH (515 aa).

Positions 1–145 (MTKRALISVS…KNHASVTVVV (145 aa)) constitute an MGS-like domain.

It belongs to the PurH family.

The catalysed reaction is (6R)-10-formyltetrahydrofolate + 5-amino-1-(5-phospho-beta-D-ribosyl)imidazole-4-carboxamide = 5-formamido-1-(5-phospho-D-ribosyl)imidazole-4-carboxamide + (6S)-5,6,7,8-tetrahydrofolate. It catalyses the reaction IMP + H2O = 5-formamido-1-(5-phospho-D-ribosyl)imidazole-4-carboxamide. It participates in purine metabolism; IMP biosynthesis via de novo pathway; 5-formamido-1-(5-phospho-D-ribosyl)imidazole-4-carboxamide from 5-amino-1-(5-phospho-D-ribosyl)imidazole-4-carboxamide (10-formyl THF route): step 1/1. Its pathway is purine metabolism; IMP biosynthesis via de novo pathway; IMP from 5-formamido-1-(5-phospho-D-ribosyl)imidazole-4-carboxamide: step 1/1. The polypeptide is Bifunctional purine biosynthesis protein PurH (Streptococcus pyogenes serotype M18 (strain MGAS8232)).